A 305-amino-acid polypeptide reads, in one-letter code: ADP,ATP carrier protein (305 aa).

Solcar repeat units follow at residues 8–101 (SNFA…IKAM), 112–204 (KWFA…LKPL), and 212–298 (NSFL…LQVI). 5 helical membrane passes run 10–37 (FAIDFLMGGVSAAVSKTAAAPIERVKLL), 78–102 (TANVIRYFPTQALNFAFKDKIKAMF), 110–130 (YAKWFAGNLASGGLAGGLSLL), 180–201 (FLPSVVGIVVYRGLYFGLYDSL), and 215–235 (LASFLLGWAVTTGASTASYPL). Arginine 83 and lysine 95 together coordinate ADP. Arginine 239 is a binding site for ADP. The tract at residues 239–244 (RRRMMM) is important for transport activity. Positions 239 to 244 (RRRMMM) match the Nucleotide carrier signature motif motif. Residues 275–295 (CGANILRGVAGAGVISMYDQL) traverse the membrane as a helical segment.

It belongs to the mitochondrial carrier (TC 2.A.29) family. Monomer.

It is found in the mitochondrion inner membrane. The enzyme catalyses ADP(in) + ATP(out) = ADP(out) + ATP(in). The matrix-open state (m-state) is inhibited by the membrane-permeable bongkrekic acid (BKA). The cytoplasmic-open state (c-state) is inhibited by the membrane-impermeable toxic inhibitor carboxyatractyloside (CATR). In terms of biological role, ADP:ATP antiporter that mediates import of ADP into the mitochondrial matrix for ATP synthesis, and export of ATP out to fuel the cell. Cycles between the cytoplasmic-open state (c-state) and the matrix-open state (m-state): operates by the alternating access mechanism with a single substrate-binding site intermittently exposed to either the cytosolic (c-state) or matrix (m-state) side of the inner mitochondrial membrane. In Kluyveromyces lactis (strain ATCC 8585 / CBS 2359 / DSM 70799 / NBRC 1267 / NRRL Y-1140 / WM37) (Yeast), this protein is ADP,ATP carrier protein (AAC).